Here is a 503-residue protein sequence, read N- to C-terminus: GMP synthase [glutamine-hydrolyzing] (503 aa).

One can recognise a Glutamine amidotransferase type-1 domain in the interval proline 3–asparagine 189. Catalysis depends on cysteine 80, which acts as the Nucleophile. Residues histidine 165 and glutamate 167 contribute to the active site. Residues tryptophan 190–arginine 380 form the GMPS ATP-PPase domain. Residue serine 217–valine 223 participates in ATP binding.

In terms of assembly, homodimer.

The enzyme catalyses XMP + L-glutamine + ATP + H2O = GMP + L-glutamate + AMP + diphosphate + 2 H(+). The protein operates within purine metabolism; GMP biosynthesis; GMP from XMP (L-Gln route): step 1/1. Its function is as follows. Catalyzes the synthesis of GMP from XMP. The chain is GMP synthase [glutamine-hydrolyzing] from Tropheryma whipplei (strain Twist) (Whipple's bacillus).